A 150-amino-acid polypeptide reads, in one-letter code: Ribonuclease pancreatic delta-type (150 aa).

Positions 1–25 (MGLEKSFILFSLLVLVLGWVQPSLG) are cleaved as a signal peptide. Residue Arg-35 coordinates substrate. The active-site Proton acceptor is His-37. 4 cysteine pairs are disulfide-bonded: Cys-51-Cys-110, Cys-65-Cys-121, Cys-83-Cys-136, and Cys-90-Cys-98. Substrate is bound by residues 66 to 70 (KRVNT), Lys-91, and Arg-111. Residue His-145 is the Proton donor of the active site.

Belongs to the pancreatic ribonuclease family. Monomer.

Its subcellular location is the secreted. It catalyses the reaction an [RNA] containing cytidine + H2O = an [RNA]-3'-cytidine-3'-phosphate + a 5'-hydroxy-ribonucleotide-3'-[RNA].. The enzyme catalyses an [RNA] containing uridine + H2O = an [RNA]-3'-uridine-3'-phosphate + a 5'-hydroxy-ribonucleotide-3'-[RNA].. Endonuclease that catalyzes the cleavage of RNA on the 3' side of pyrimidine nucleotides. Acts on single-stranded and double-stranded RNA. The protein is Ribonuclease pancreatic delta-type (Rnase1d) of Rattus norvegicus (Rat).